The chain runs to 806 residues: Volume-regulated anion channel subunit LRRC8E (806 aa).

The Cytoplasmic segment spans residues 1 to 22 (MIPVAEFKQFTEQQPAFKVLKP). Residues 23-43 (WWDVLAEYITYAMLMIGVFGC) form a helical membrane-spanning segment. Over 44 to 130 (TLQVTQDKII…YETALHWYAK (87 aa)) the chain is Extracellular. Cys-54 and Cys-311 are disulfide-bonded. Residues Asn-57 and Asn-80 are each glycosylated (N-linked (GlcNAc...) asparagine). Positions 72-81 (YDQQSPPSND) are enriched in polar residues. A disordered region spans residues 72–103 (YDQQSPPSNDSDLETTIPPPTATSSPPREMSG). Residues 131-151 (YFPYLVVIHTLIFIICGNFWF) form a helical membrane-spanning segment. Residues 152–275 (KFPGTSSKIE…MRQTVLKVCK (124 aa)) lie on the Cytoplasmic side of the membrane. Residues 182–213 (EVSGESSQEKPSQERSIDRELSKPNFEEGSPA) are disordered. Residues 188–207 (SQEKPSQERSIDRELSKPNF) are compositionally biased toward basic and acidic residues. Residues 276–296 (FVLITIYNAVLVGKIHFIVPC) traverse the membrane as a helical segment. The Extracellular portion of the chain corresponds to 297-323 (SVHTEDMTGYNSFCCNHTKAHLFSKLA). Residue Asn-312 is glycosylated (N-linked (GlcNAc...) asparagine). The chain crosses the membrane as a helical span at residues 324–344 (ITYLCFLGVYGLTCLYTLYWL). Topologically, residues 345 to 806 (FRRPLKEYSF…VEVRDKLKED (462 aa)) are cytoplasmic. LRR repeat units follow at residues 544 to 566 (LKSLKVLTIKSNLSKIPATVADV), 569 to 589 (HLQKFSIHNDGTKLLTLNALK), 593 to 614 (LVKELELVRCELERIPHAVFSL), 616 to 637 (NLQVLDLKENTLHTIEEIISLQ), 641 to 662 (KLSVLRLWHNQIAYIPEHIRKL), 664 to 685 (GLEELSLNRNKILVIPSQLFLC), 687 to 708 (KLRHLDLSNNEIRELPPEIGVL), 710 to 731 (LLQYLGLSGNFLEDLPNELFFC), 733 to 754 (KLKTLKLGQNRLGNLSPKVGSL), and 756 to 777 (CLVKLELKGNRMDTLPPELGNC).

The protein belongs to the LRRC8 family. Heterohexamer; oligomerizes with other LRRC8 proteins (lrrc8a, lrrc8c, lrrc8d and/or lrrc8b) to form a heterohexamer. Detected in a channel complex that contains lrrc8a, lrrc8c and lrrc8e. In vivo, the subunit composition may depend primarily on expression levels, and heterooligomeric channels containing various proportions of the different LRRC8 proteins may coexist.

The protein localises to the cell membrane. It localises to the endoplasmic reticulum membrane. Its subcellular location is the lysosome membrane. The enzyme catalyses chloride(in) = chloride(out). It carries out the reaction iodide(out) = iodide(in). The catalysed reaction is taurine(out) = taurine(in). It catalyses the reaction 2',3'-cGAMP(out) = 2',3'-cGAMP(in). Its function is as follows. Non-essential component of the volume-regulated anion channel (VRAC, also named VSOAC channel), an anion channel required to maintain a constant cell volume in response to extracellular or intracellular osmotic changes. The VRAC channel conducts iodide better than chloride and can also conduct organic osmolytes like taurine. Mediates efflux of amino acids, such as aspartate, in response to osmotic stress. The VRAC channel also mediates transport of immunoreactive cyclic dinucleotide GMP-AMP (2'-3'-cGAMP), an immune messenger produced in response to DNA virus in the cytosol. Channel activity requires lrrc8a plus at least one other family member (lrrc8b, lrrc8c, lrrc8d or lrrc8e); channel characteristics depend on the precise subunit composition. Also plays a role in lysosome homeostasis by forming functional lysosomal VRAC channels in response to low cytoplasmic ionic strength condition: lysosomal VRAC channels are necessary for the formation of large lysosome-derived vacuoles, which store and then expel excess water to maintain cytosolic water homeostasis. The polypeptide is Volume-regulated anion channel subunit LRRC8E (Xenopus tropicalis (Western clawed frog)).